The primary structure comprises 499 residues: Putative protein phosphatase 2C 76 (499 aa).

An N-terminal signal peptide occupies residues 1 to 34 (MRLGCSGRRRRLLRAALLRLVVLVLVAPPRRCAG). The segment at 67-101 (AGSGGEGDGDRRSSSSSPPPPPHPRGCHVAVDRGR) is disordered. Positions 92 to 457 (GCHVAVDRGR…DNVAAVIVPL (366 aa)) constitute a PPM-type phosphatase domain. 2 residues coordinate Mn(2+): Asp138 and Gly139. Residues 286 to 306 (KKTSVVSGKRRRKRNSNNRDD) form a disordered region. Residues Asp397 and Asp448 each contribute to the Mn(2+) site.

This sequence belongs to the PP2C family. Mg(2+) serves as cofactor. The cofactor is Mn(2+).

The enzyme catalyses O-phospho-L-seryl-[protein] + H2O = L-seryl-[protein] + phosphate. It catalyses the reaction O-phospho-L-threonyl-[protein] + H2O = L-threonyl-[protein] + phosphate. The chain is Putative protein phosphatase 2C 76 from Oryza sativa subsp. japonica (Rice).